The primary structure comprises 138 residues: Small ribosomal subunit protein uS11c (138 aa).

The interval 1-23 (MAKPILRIGSRKNTRSGSRKNVR) is disordered. The segment covering 9 to 23 (GSRKNTRSGSRKNVR) has biased composition (basic residues).

Belongs to the universal ribosomal protein uS11 family. Part of the 30S ribosomal subunit.

Its subcellular location is the plastid. It localises to the chloroplast. This is Small ribosomal subunit protein uS11c from Aethionema grandiflorum (Persian stone-cress).